A 240-amino-acid polypeptide reads, in one-letter code: 1-(5-phosphoribosyl)-5-[(5-phosphoribosylamino)methylideneamino] imidazole-4-carboxamide isomerase (240 aa).

Asp-8 serves as the catalytic Proton acceptor. The active-site Proton donor is the Asp-129.

The protein belongs to the HisA/HisF family.

The protein localises to the cytoplasm. It carries out the reaction 1-(5-phospho-beta-D-ribosyl)-5-[(5-phospho-beta-D-ribosylamino)methylideneamino]imidazole-4-carboxamide = 5-[(5-phospho-1-deoxy-D-ribulos-1-ylimino)methylamino]-1-(5-phospho-beta-D-ribosyl)imidazole-4-carboxamide. It functions in the pathway amino-acid biosynthesis; L-histidine biosynthesis; L-histidine from 5-phospho-alpha-D-ribose 1-diphosphate: step 4/9. This Listeria monocytogenes serotype 4a (strain HCC23) protein is 1-(5-phosphoribosyl)-5-[(5-phosphoribosylamino)methylideneamino] imidazole-4-carboxamide isomerase.